The chain runs to 390 residues: Substance-K receptor (390 aa).

Over 1 to 32 (MGTRAIVSDANILSGLESNATGVTAFSMPGWQ) the chain is Extracellular. Asparagine 19 carries an N-linked (GlcNAc...) asparagine glycan. A helical transmembrane segment spans residues 33-56 (LALWATAYLALVLVAVTGNATVIW). Topologically, residues 57 to 69 (IILAHERMRTVTN) are cytoplasmic. The chain crosses the membrane as a helical span at residues 70-90 (YFIINLALADLCMAAFNATFN). Residues 91–107 (FIYASHNIWYFGRAFCY) are Extracellular-facing. Cysteine 106 and cysteine 181 are joined by a disulfide. Residues 108 to 129 (FQNLFPITAMFVSIYSMTAIAA) form a helical membrane-spanning segment. At 130–149 (DRYMAIVHPFQPRLSAPSTK) the chain is on the cytoplasmic side. The helical transmembrane segment at 150-170 (AIIAGIWLVALALASPQCFYS) threads the bilayer. Residues 171 to 196 (TITVDEGATKCVVAWPNDNGGKMLLL) lie on the Extracellular side of the membrane. The chain crosses the membrane as a helical span at residues 197-218 (YHLVVFVLIYFLPLLVMFGAYS). Topologically, residues 219 to 251 (VIGLTLWKRAVPRHQAHGANLRHLQAKKKFVKA) are cytoplasmic. A helical membrane pass occupies residues 252–272 (MVLVVLTFAICWLPYHLYFIL). Topologically, residues 273–290 (GTFQEDIYYHKFIQQVYL) are extracellular. The helical transmembrane segment at 291–310 (ALFWLAMSSTMYNPIIYCCL) threads the bilayer. At 311-390 (NHRFRSGFRL…PAGPICKAQA (80 aa)) the chain is on the cytoplasmic side. A lipid anchor (S-palmitoyl cysteine) is attached at cysteine 324. Residues 365 to 390 (HSEATNGQVGSPQDGEPAGPICKAQA) form a disordered region. Polar residues predominate over residues 366 to 375 (SEATNGQVGS).

It belongs to the G-protein coupled receptor 1 family.

The protein resides in the cell membrane. Its function is as follows. This is a receptor for the tachykinin neuropeptide substance K (neurokinin A). It is associated with G proteins that activate a phosphatidylinositol-calcium second messenger system. The rank order of affinity of this receptor to tachykinins is: substance K &gt; neuromedin-K &gt; substance P. The sequence is that of Substance-K receptor (Tacr2) from Rattus norvegicus (Rat).